The chain runs to 191 residues: MRPIILASASPRRQELLKNLGLEFEVQVSDVDENLEENISSGQLVEKLAERKAAAVALIRTQGLVIGADTIVVLGDKPLGKPTNREEAVQMLSNLQGKSHEVFTGLAVIDASTGQRVVTHQVTEVNFKTLTKDQIERYVDTGEPMDKAGGYAVQGLASIFIDSIRGCYFSVVGLPISKLADALRMFGVEIV.

Asp-69 functions as the Proton acceptor in the catalytic mechanism.

Belongs to the Maf family. YhdE subfamily. Requires a divalent metal cation as cofactor.

The protein resides in the cytoplasm. It catalyses the reaction dTTP + H2O = dTMP + diphosphate + H(+). The catalysed reaction is UTP + H2O = UMP + diphosphate + H(+). In terms of biological role, nucleoside triphosphate pyrophosphatase that hydrolyzes dTTP and UTP. May have a dual role in cell division arrest and in preventing the incorporation of modified nucleotides into cellular nucleic acids. In Desulforamulus reducens (strain ATCC BAA-1160 / DSM 100696 / MI-1) (Desulfotomaculum reducens), this protein is dTTP/UTP pyrophosphatase.